A 521-amino-acid chain; its full sequence is MDELLLDLFHKLTSGRQLAAGNGLCGISHKEQEVWKPGHNILVKMRKEDKSLVWLIHSTLARYTQVTNFLGTSRSSVTRCKPGANCPSSHSGISRQLSPLSVTEDSSAPILELQNQGSSGVCGHRVERQNRSADDGTQTHSENSSQENRIKARCLSCTSMVLKGIWGLLIILSVSSSWVGTTQIVKITYKNFYCPFFMTWFSTNWNIMFFPVYYSGHLATAQEKQSPMKKFRECSRIFGEDGLTLKLFLKRTAPFSILWTLTNYLYLLALKKLTATDVSALFCCNKAFVFLLSWIVLKDRFMGVRIVAAIMAITGIVMMAYADNFHADSIIGVAFAVGSASTSALYKVLFKMFLGSANFGEAAHFVSTLGFFNLIFISFTPVILYFTKVEHWSSFAALPWGCLCGMAGLWLAFNILVNVGVVLTYPILISIGTVLSVPGNAAVDLLKQEVIFNVVRLAATIIICIGFLLMLLPEEWDEITLRFINSLKEKKSEEHVDDVTDPSIHLRGRGRANGTVSIPLA.

Transmembrane regions (helical) follow at residues methionine 160 to glycine 180, phenylalanine 192 to valine 212, phenylalanine 248 to tyrosine 266, aspartate 277 to leucine 297, phenylalanine 301 to tyrosine 321, isoleucine 330 to phenylalanine 350, phenylalanine 365 to tyrosine 385, phenylalanine 395 to valine 417, valine 419 to alanine 441, and valine 450 to methionine 470. In terms of domain architecture, EamA spans leucine 261–tyrosine 321.

The protein belongs to the SLC35F solute transporter family.

The protein resides in the membrane. In terms of biological role, putative solute transporter. The chain is Solute carrier family 35 member F4 (SLC35F4) from Homo sapiens (Human).